The primary structure comprises 440 residues: Elongation factor 1-alpha (440 aa).

The region spanning 5–228 (KPHINLVVIG…ALDTYIQPPK (224 aa)) is the tr-type G domain. The tract at residues 14–21 (GHVDHGKS) is G1. GTP is bound at residue 14-21 (GHVDHGKS). Ser21 is a binding site for Mg(2+). Residues 70 to 74 (GVTID) form a G2 region. The tract at residues 91–94 (DAPG) is G3. GTP contacts are provided by residues 91 to 95 (DAPGH) and 153 to 156 (NKMD). Positions 153–156 (NKMD) are G4. The segment at 194–196 (SAW) is G5.

The protein belongs to the TRAFAC class translation factor GTPase superfamily. Classic translation factor GTPase family. EF-Tu/EF-1A subfamily.

It localises to the cytoplasm. The enzyme catalyses GTP + H2O = GDP + phosphate + H(+). In terms of biological role, GTP hydrolase that promotes the GTP-dependent binding of aminoacyl-tRNA to the A-site of ribosomes during protein biosynthesis. The protein is Elongation factor 1-alpha of Hyperthermus butylicus (strain DSM 5456 / JCM 9403 / PLM1-5).